Here is a 689-residue protein sequence, read N- to C-terminus: Pyocin-S2 (689 aa).

Residues His-656, His-681, and His-685 each coordinate Zn(2+).

This sequence belongs to the colicin/pyosin nuclease family. As to quaternary structure, purified pyocin S2 makes up a complex of the two (large and small) proteins. The large protein, but not the pyocin complex, shows in vitro DNase activity.

Functionally, causes breakdown of chromosomal DNA as well as complete inhibition of lipid synthesis in sensitive cells. The sequence is that of Pyocin-S2 (pys2) from Pseudomonas aeruginosa (strain ATCC 15692 / DSM 22644 / CIP 104116 / JCM 14847 / LMG 12228 / 1C / PRS 101 / PAO1).